Consider the following 249-residue polypeptide: 23S rRNA (guanosine-2'-O-)-methyltransferase RlmB (249 aa).

S-adenosyl-L-methionine-binding residues include glycine 200, isoleucine 220, and leucine 229.

The protein belongs to the class IV-like SAM-binding methyltransferase superfamily. RNA methyltransferase TrmH family. RlmB subfamily.

The protein resides in the cytoplasm. The catalysed reaction is guanosine(2251) in 23S rRNA + S-adenosyl-L-methionine = 2'-O-methylguanosine(2251) in 23S rRNA + S-adenosyl-L-homocysteine + H(+). Specifically methylates the ribose of guanosine 2251 in 23S rRNA. The protein is 23S rRNA (guanosine-2'-O-)-methyltransferase RlmB of Xylella fastidiosa (strain Temecula1 / ATCC 700964).